Reading from the N-terminus, the 403-residue chain is Putative queuine tRNA-ribosyltransferase (403 aa).

The active-site Proton acceptor is Asp-91. Substrate-binding positions include 91–95 (DSGGF), Asp-177, Gln-218, and Gly-245. Residues 275-281 (GIGAIED) are RNA binding. Residue Asp-294 is the Nucleophile of the active site. The RNA binding; important for wobble base 34 recognition stretch occupies residues 299–303 (ARWAR). Zn(2+) is bound by residues Cys-341, Cys-343, Cys-346, and His-372.

The protein belongs to the queuine tRNA-ribosyltransferase family. Homodimer. Within each dimer, one monomer is responsible for RNA recognition and catalysis, while the other monomer binds to the replacement base PreQ1. Zn(2+) is required as a cofactor.

The enzyme catalyses 7-aminomethyl-7-carbaguanine + guanosine(34) in tRNA = 7-aminomethyl-7-carbaguanosine(34) in tRNA + guanine. In terms of biological role, catalyzes the base-exchange of a guanine (G) residue with the queuine precursor 7-aminomethyl-7-deazaguanine (PreQ1) at position 34 (anticodon wobble position) in tRNAs with GU(N) anticodons (tRNA-Asp, -Asn, -His and -Tyr). Catalysis occurs through a double-displacement mechanism. The nucleophile active site attacks the C1' of nucleotide 34 to detach the guanine base from the RNA, forming a covalent enzyme-RNA intermediate. The proton acceptor active site deprotonates the incoming PreQ1, allowing a nucleophilic attack on the C1' of the ribose to form the product. After dissociation, two additional enzymatic reactions on the tRNA convert PreQ1 to queuine (Q), resulting in the hypermodified nucleoside queuosine (7-(((4,5-cis-dihydroxy-2-cyclopenten-1-yl)amino)methyl)-7-deazaguanosine). The chain is Putative queuine tRNA-ribosyltransferase from Archaeoglobus fulgidus (strain ATCC 49558 / DSM 4304 / JCM 9628 / NBRC 100126 / VC-16).